The sequence spans 162 residues: 2-C-methyl-D-erythritol 2,4-cyclodiphosphate synthase (162 aa).

Residues Asp-8 and His-10 each contribute to the a divalent metal cation site. Residues 8 to 10 (DVH) and 36 to 37 (HS) each bind 4-CDP-2-C-methyl-D-erythritol 2-phosphate. His-44 provides a ligand contact to a divalent metal cation. 4-CDP-2-C-methyl-D-erythritol 2-phosphate-binding positions include 58–60 (DIG), 63–67 (FPDTD), 102–108 (AQAPKMA), 134–137 (TTTE), Phe-141, and Arg-144.

This sequence belongs to the IspF family. Homotrimer. Requires a divalent metal cation as cofactor.

The enzyme catalyses 4-CDP-2-C-methyl-D-erythritol 2-phosphate = 2-C-methyl-D-erythritol 2,4-cyclic diphosphate + CMP. The protein operates within isoprenoid biosynthesis; isopentenyl diphosphate biosynthesis via DXP pathway; isopentenyl diphosphate from 1-deoxy-D-xylulose 5-phosphate: step 4/6. Involved in the biosynthesis of isopentenyl diphosphate (IPP) and dimethylallyl diphosphate (DMAPP), two major building blocks of isoprenoid compounds. Catalyzes the conversion of 4-diphosphocytidyl-2-C-methyl-D-erythritol 2-phosphate (CDP-ME2P) to 2-C-methyl-D-erythritol 2,4-cyclodiphosphate (ME-CPP) with a corresponding release of cytidine 5-monophosphate (CMP). The sequence is that of 2-C-methyl-D-erythritol 2,4-cyclodiphosphate synthase from Yersinia enterocolitica serotype O:8 / biotype 1B (strain NCTC 13174 / 8081).